Reading from the N-terminus, the 62-residue chain is Photosystem II reaction center protein Z (62 aa).

Transmembrane regions (helical) follow at residues 8-28 and 41-61; these read ALIG…VAYA and WVGS…NFFV.

The protein belongs to the PsbZ family. In terms of assembly, PSII is composed of 1 copy each of membrane proteins PsbA, PsbB, PsbC, PsbD, PsbE, PsbF, PsbH, PsbI, PsbJ, PsbK, PsbL, PsbM, PsbT, PsbX, PsbY, PsbZ, Psb30/Ycf12, peripheral proteins PsbO, CyanoQ (PsbQ), PsbU, PsbV and a large number of cofactors. It forms dimeric complexes.

Its subcellular location is the cellular thylakoid membrane. In terms of biological role, may control the interaction of photosystem II (PSII) cores with the light-harvesting antenna, regulates electron flow through the 2 photosystem reaction centers. PSII is a light-driven water plastoquinone oxidoreductase, using light energy to abstract electrons from H(2)O, generating a proton gradient subsequently used for ATP formation. This chain is Photosystem II reaction center protein Z, found in Nostoc punctiforme (strain ATCC 29133 / PCC 73102).